The primary structure comprises 206 residues: Ras-related protein Rab-14 (206 aa).

A GTP-binding site is contributed by 15 to 22 (GDMGVGKS). The Effector region motif lies at 37–45 (SPHTIGVEF). Residues 63–67 (DTAGQ) and 121–124 (NKKD) contribute to the GTP site. Residues 182 to 206 (PDGGITKNPPQTITDKPQDASKCSC) form a disordered region. The span at 189–206 (NPPQTITDKPQDASKCSC) shows a compositional bias: polar residues. S-geranylgeranyl cysteine attachment occurs at residues C204 and C206. C206 is subject to Cysteine methyl ester.

The protein belongs to the small GTPase superfamily. Rab family.

The protein localises to the endosome. It localises to the contractile vacuole. It is found in the membrane. The enzyme catalyses GTP + H2O = GDP + phosphate + H(+). With respect to regulation, rab activation is generally mediated by a guanine exchange factor (GEF), while inactivation through hydrolysis of bound GTP is catalyzed by a GTPase activating protein (GAP). That Rab is activated by the DENND6A and DENND6B guanine exchange factors (GEF). Functionally, the small GTPases Rab are key regulators of intracellular membrane trafficking, from the formation of transport vesicles to their fusion with membranes. Rabs cycle between an inactive GDP-bound form and an active GTP-bound form that is able to recruit to membranes different set of downstream effectors directly responsible for vesicle formation, movement, tethering and fusion. Regulates the fusion of phagosomes and lysosomes. The chain is Ras-related protein Rab-14 (rab14) from Dictyostelium discoideum (Social amoeba).